Reading from the N-terminus, the 243-residue chain is MALFRGMWSVLKALGRTGVEMCAGCGGRIPSSISLVCIPKCFSSMGSYPKKPMSSYLRFSTEQLPKFKAKHPDAKLSELVRKIAALWRELPEAEKKVYEADFKAEWKAYKEAVSKYKEQLTPSQLMGMEKEARQRRLKKKALVKRRELILLGKPKRPRSAYNIYVSESFQEAKDDSAQGKLKLVNEAWKNLSPEEKQAYIQLAKDDRIRYDNEMKSWEEQMAEVGRSDLIRRSVKRSGDISEH.

A mitochondrion-targeting transit peptide spans 1-42; that stretch reads MALFRGMWSVLKALGRTGVEMCAGCGGRIPSSISLVCIPKCF. Positions 49-117 form a DNA-binding region, HMG box 1; it reads PKKPMSSYLR…AYKEAVSKYK (69 aa). 3 positions are modified to phosphoserine; by PKA: S54, S55, and S60. Position 66 is an N6-succinyllysine (K66). T121 bears the Phosphothreonine mark. The segment at residues 154–218 is a DNA-binding region (HMG box 2); the sequence is PKRPRSAYNI…RYDNEMKSWE (65 aa). S159 is subject to Phosphoserine; by PKA. S192 is modified (phosphoserine).

In terms of assembly, monomer; binds DNA as a monomer. Homodimer. Component of the mitochondrial transcription initiation complex, composed at least of TFB2M, TFAM and POLRMT. In this complex TFAM recruits POLRMT to the promoter whereas TFB2M induces structural changes in POLRMT to enable promoter opening and trapping of the DNA non-template strand. Upon metabolic stress, forms a complex composed of FOXO3, SIRT3, TFAM and POLRMT. Interacts with TFB1M and TFB2M. Interacts with CLPX; this enhances DNA-binding. Post-translationally, phosphorylation by PKA within the HMG box 1 impairs DNA binding and promotes degradation by the AAA+ Lon protease. As to expression, the mitochondrial isoform is widely expressed while the nuclear isoform is testis-specific.

It localises to the mitochondrion. It is found in the mitochondrion matrix. The protein resides in the mitochondrion nucleoid. Its subcellular location is the nucleus. Functionally, binds to the mitochondrial light strand promoter and functions in mitochondrial transcription regulation. Component of the mitochondrial transcription initiation complex, composed at least of TFB2M, TFAM and POLRMT that is required for basal transcription of mitochondrial DNA. In this complex, TFAM recruits POLRMT to a specific promoter whereas TFB2M induces structural changes in POLRMT to enable promoter opening and trapping of the DNA non-template strand. Required for accurate and efficient promoter recognition by the mitochondrial RNA polymerase. Promotes transcription initiation from the HSP1 and the light strand promoter by binding immediately upstream of transcriptional start sites. Is able to unwind DNA. Bends the mitochondrial light strand promoter DNA into a U-turn shape via its HMG boxes. Required for maintenance of normal levels of mitochondrial DNA. May play a role in organizing and compacting mitochondrial DNA. Its function is as follows. May also function as a transcriptional activator or may have a structural role in the compaction of nuclear DNA during spermatogenesis. This is Transcription factor A, mitochondrial from Mus musculus (Mouse).